A 253-amino-acid polypeptide reads, in one-letter code: 5'/3'-nucleotidase SurE (253 aa).

Residues aspartate 8, aspartate 9, serine 39, and asparagine 92 each contribute to the a divalent metal cation site.

Belongs to the SurE nucleotidase family. Requires a divalent metal cation as cofactor.

The protein localises to the cytoplasm. It carries out the reaction a ribonucleoside 5'-phosphate + H2O = a ribonucleoside + phosphate. It catalyses the reaction a ribonucleoside 3'-phosphate + H2O = a ribonucleoside + phosphate. The enzyme catalyses [phosphate](n) + H2O = [phosphate](n-1) + phosphate + H(+). Functionally, nucleotidase with a broad substrate specificity as it can dephosphorylate various ribo- and deoxyribonucleoside 5'-monophosphates and ribonucleoside 3'-monophosphates with highest affinity to 3'-AMP. Also hydrolyzes polyphosphate (exopolyphosphatase activity) with the preference for short-chain-length substrates (P20-25). Might be involved in the regulation of dNTP and NTP pools, and in the turnover of 3'-mononucleotides produced by numerous intracellular RNases (T1, T2, and F) during the degradation of various RNAs. This is 5'/3'-nucleotidase SurE from Erwinia tasmaniensis (strain DSM 17950 / CFBP 7177 / CIP 109463 / NCPPB 4357 / Et1/99).